A 363-amino-acid chain; its full sequence is 3-methyl-D-ornithine--L-lysine ligase (363 aa).

Lys10 is an ATP binding site. 11–12 is an L-lysine binding site; that stretch reads LQ. Residues Asp31, 49–50, and 72–73 contribute to the ATP site; these read DV and EN. Position 72 (Glu72) interacts with L-lysine. Residues Lys104, Lys131, Ser138, and 160–163 contribute to the ADP site; that span reads EEYV. Residues 169-171 and Asp225 each bind D-ornithine; that span reads SLE. Mg(2+)-binding residues include Glu227, Glu239, and Asp241. Position 239 (Glu239) interacts with ADP. Residues 243 to 248 and Glu302 each bind D-ornithine; that span reads RFPSQT. L-lysine is bound by residues Ser246 and Glu302.

This sequence belongs to the PylC family. Mg(2+) is required as a cofactor.

The enzyme catalyses (3R)-3-methyl-D-ornithine + L-lysine + ATP = (3R)-3-methyl-D-ornithyl-N(6)-L-lysine + ADP + phosphate + H(+). The protein operates within amino-acid biosynthesis; L-pyrrolysine biosynthesis. Its function is as follows. Is required for the biosynthesis of pyrrolysine. Catalyzes the ATP-dependent ligation between (3R)-3-methyl-D-ornithine and L-lysine, leading to (3R)-3-methyl-D-ornithyl-N6-L-lysine. This Methanosarcina barkeri (strain Fusaro / DSM 804) protein is 3-methyl-D-ornithine--L-lysine ligase.